Reading from the N-terminus, the 226-residue chain is PKHD-type hydroxylase MADE_1018490 (226 aa).

The region spanning 77–177 (RIFPPCFNRY…RIAAITWIQS (101 aa)) is the Fe2OG dioxygenase domain. Positions 95, 97, and 158 each coordinate Fe cation. R168 contributes to the 2-oxoglutarate binding site.

The cofactor is Fe(2+). It depends on L-ascorbate as a cofactor.

This is PKHD-type hydroxylase MADE_1018490 from Alteromonas mediterranea (strain DSM 17117 / CIP 110805 / LMG 28347 / Deep ecotype).